Here is a 245-residue protein sequence, read N- to C-terminus: Large ribosomal subunit protein uL2 (245 aa).

The interval 196–226 (SPYAHPHGGGSHQKGGTPVSKTAPPGQKVGF) is disordered.

Belongs to the universal ribosomal protein uL2 family. In terms of assembly, part of the 50S ribosomal subunit. Forms a bridge to the 30S subunit in the 70S ribosome.

Functionally, one of the primary rRNA binding proteins. Required for association of the 30S and 50S subunits to form the 70S ribosome, for tRNA binding and peptide bond formation. It has been suggested to have peptidyltransferase activity; this is somewhat controversial. Makes several contacts with the 16S rRNA in the 70S ribosome. This Pyrobaculum neutrophilum (strain DSM 2338 / JCM 9278 / NBRC 100436 / V24Sta) (Thermoproteus neutrophilus) protein is Large ribosomal subunit protein uL2.